Consider the following 91-residue polypeptide: Acylphosphatase (91 aa).

One can recognise an Acylphosphatase-like domain in the interval glutamine 3–tyrosine 90. Residues arginine 18 and asparagine 36 contribute to the active site.

It belongs to the acylphosphatase family.

The enzyme catalyses an acyl phosphate + H2O = a carboxylate + phosphate + H(+). The sequence is that of Acylphosphatase (acyP) from Bacillus subtilis (strain 168).